A 434-amino-acid polypeptide reads, in one-letter code: 5-methylthioadenosine/S-adenosylhomocysteine deaminase (434 aa).

H66 and H68 together coordinate Zn(2+). E95, R148, and H188 together coordinate substrate. Position 215 (H215) interacts with Zn(2+). Substrate contacts are provided by E218 and D304. D304 contributes to the Zn(2+) binding site.

Belongs to the metallo-dependent hydrolases superfamily. MTA/SAH deaminase family. Requires Zn(2+) as cofactor.

It catalyses the reaction S-adenosyl-L-homocysteine + H2O + H(+) = S-inosyl-L-homocysteine + NH4(+). The catalysed reaction is S-methyl-5'-thioadenosine + H2O + H(+) = S-methyl-5'-thioinosine + NH4(+). Functionally, catalyzes the deamination of 5-methylthioadenosine and S-adenosyl-L-homocysteine into 5-methylthioinosine and S-inosyl-L-homocysteine, respectively. Is also able to deaminate adenosine. The sequence is that of 5-methylthioadenosine/S-adenosylhomocysteine deaminase from Shouchella clausii (strain KSM-K16) (Alkalihalobacillus clausii).